The chain runs to 207 residues: Outer-membrane lipoprotein LolB (207 aa).

Positions 1 to 21 (MTLPDFRLIRLLPLASLVLTA) are cleaved as a signal peptide. Cys-22 is lipidated: N-palmitoyl cysteine. The S-diacylglycerol cysteine moiety is linked to residue Cys-22.

It belongs to the LolB family. As to quaternary structure, monomer.

It is found in the cell outer membrane. In terms of biological role, plays a critical role in the incorporation of lipoproteins in the outer membrane after they are released by the LolA protein. The polypeptide is Outer-membrane lipoprotein LolB (Salmonella arizonae (strain ATCC BAA-731 / CDC346-86 / RSK2980)).